Reading from the N-terminus, the 888-residue chain is Semaphorin-6B (888 aa).

The N-terminal stretch at 1-25 (MQTPRASPPRPALLLLLLLLGGAHG) is a signal peptide. Topologically, residues 26–603 (LFPEEPPPLS…VSVNLLVTSS (578 aa)) are extracellular. A Sema domain is found at 31 to 523 (PPPLSVAPRD…FPRCVVRVPV (493 aa)). Residue N74 is glycosylated (N-linked (GlcNAc...) asparagine). 2 disulfide bridges follow: C116-C126 and C144-C153. Residues N155, N167, and N291 are each glycosylated (N-linked (GlcNAc...) asparagine). 2 disulfides stabilise this stretch: C267-C378 and C292-C337. Residues N386, N441, and N462 are each glycosylated (N-linked (GlcNAc...) asparagine). 4 disulfide bridges follow: C486–C517, C526–C544, C532–C578, and C536–C552. The helical transmembrane segment at 604–624 (VAAFVVGAVVSGFSVGWFVGL) threads the bilayer. The Cytoplasmic segment spans residues 625–888 (RERRELARRK…GADRTAPPVP (264 aa)). Disordered stretches follow at residues 651–679 (VSRLGERRAQGPGGRGGGGGGGAGVPPEA), 695–742 (LQGG…HPLL), and 757–888 (RAPE…PPVP). A compositionally biased stretch (gly residues) spans 661-674 (GPGGRGGGGGGGAG). Omega-N-methylarginine is present on R665. The span at 706–717 (LLPTPEQTPLPQ) shows a compositional bias: low complexity.

This sequence belongs to the semaphorin family. As to quaternary structure, (Microbial infection) Interacts with P.sordellii toxin TcsL; semaphorins SEMA6A and SEMA6B constitute the major host receptors for TcsL in the vascular endothelium. In terms of tissue distribution, expressed in the brain in GABAergic neurons.

The protein resides in the cell membrane. Functionally, functions as a cell surface repellent for mossy fibers of developing neurons in the hippocampus where it plays a role in axon guidance. May function through the PLXNA4 receptor expressed by mossy cell axons. In terms of biological role, (Microbial infection) Acts as a receptor for P.sordellii toxin TcsL in the in the vascular endothelium. The sequence is that of Semaphorin-6B (SEMA6B) from Homo sapiens (Human).